The chain runs to 1735 residues: Cadherin-AgCad1 (1735 aa).

An N-terminal signal peptide occupies residues Met-1 to Cys-30. Residues Gln-31–Gln-1574 lie on the Extracellular side of the membrane. Positions Val-166–Arg-1456 are extracellular domain (EC). 11 Cadherin domains span residues Phe-171–Phe-273, Glu-280–Ile-378, Tyr-379–Phe-498, Gly-499–Ile-620, Thr-621–Phe-757, Ser-767–His-866, Glu-879–Leu-983, Glu-985–Ile-1109, Gly-1136–Phe-1235, Ala-1255–Phe-1350, and Gln-1351–Phe-1461. 2 consecutive short sequence motifs (toxin-binding receptor motif) follow at residues Asn-1344 to Phe-1350 and Ala-1446 to Arg-1456. The interval Gly-1358–Ala-1569 is CR11-MPED, increases toxicity of activated Cry4B toxin, peptide alone is not toxic. A membrane-proximal EC domain (MPED) region spans residues Val-1457–Ala-1569. A helical transmembrane segment spans residues Ile-1575–Phe-1595. Topologically, residues Phe-1596–Phe-1735 are cytoplasmic. Polar residues predominate over residues Ser-1701–Ser-1719. The segment at Ser-1701 to Phe-1735 is disordered. A compositionally biased stretch (basic and acidic residues) spans Lys-1722 to Phe-1735.

Larval midgut (at protein level).

The protein resides in the apical cell membrane. The protein localises to the cell projection. It is found in the microvillus membrane. Functionally, cadherins are calcium-dependent cell adhesion proteins. They preferentially interact with themselves in a homophilic manner in connecting cells. Its function is as follows. (Microbial infection) Binds to and is probably the functional receptor for B.thuringiensis subsp. israelensis (Bti) insecticidal toxin Cry4B. Trichoplusia ni insect cells stably transfected with this protein become suspectible to Cry4B; cells undergo oncosis, they bleb and ruffle after 20-40 minutes, swell after 40-60 minutes and lyse after 90 minutes. Following toxin treatment in the T.in insect system levels of intracellular 3',5'-cyclic AMP (cAMP) rise 12.5-fold; EDTA but not EGTA pretreatment prevents cAMP increase. Inorganic phosphate also rises 3.4-fold after toxin treatment. The polypeptide is Cadherin-AgCad1 (Anopheles gambiae (African malaria mosquito)).